A 361-amino-acid chain; its full sequence is uncharacterized protein (361 aa).

This is an uncharacterized protein from Methanothermobacter thermautotrophicus (Methanobacterium thermoformicicum).